Consider the following 189-residue polypeptide: Early E3 20.5 kDa glycoprotein (189 aa).

Asn-73 and Asn-137 each carry an N-linked (GlcNAc...) asparagine; by host glycan.

Belongs to the adenoviridae E3_20 family.

Its function is as follows. E3 proteins seem to be dispensable for virus growth in tissue culture cells. They are potentially important for virus growth under special conditions; E3 region may help adenoviruses to evade the immune surveillance of the host. This chain is Early E3 20.5 kDa glycoprotein, found in Human adenovirus B serotype 3 (HAdV-3).